The sequence spans 1980 residues: Unconventional myosin-IXb (1980 aa).

Ser-2 carries the post-translational modification N-acetylserine. A Ras-associating domain is found at 15–114; it reads ATFHLHIYPQ…YYFLLQERNA (100 aa). One can recognise a Myosin motor domain in the interval 146-954; the sequence is ADFDDLCNLP…ERQALQERLH (809 aa). 239–246 contacts ATP; the sequence is GESGSGKT. The tract at residues 715 to 736 is disordered; sequence GVSSPVTRSHVEELPRGANTPS. Phosphoserine is present on residues Ser-717 and Ser-718. An actin-binding region spans residues 845–856; it reads KAEPFFIRCIRS. A neck or regulatory domain region spans residues 941–1045; sequence LKETERQALQ…CRGHLQRRSF (105 aa). 4 IQ domains span residues 958–978, 981–1001, 1002–1024, and 1025–1054; these read LRRI…RHFV, KHAA…RTLE, RTRA…AYHH, and QRHS…EKQK. Phosphoserine is present on Ser-1046. Residues 1046–1980 are tail; sequence SQMMLEKQKA…ERAVRGAAEE (935 aa). 3 disordered regions span residues 1049–1281, 1302–1380, and 1394–1449; these read MLEK…HPDT, SQSL…QGDS, and DKKP…NRKV. Positions 1097–1106 are enriched in polar residues; that stretch reads TWMNSKSPNG. A phosphoserine mark is found at Ser-1108, Ser-1115, and Ser-1177. Composition is skewed to basic and acidic residues over residues 1129–1177 and 1186–1195; these read ESHE…RKAS and EDTKEPREDG. A phosphoserine mark is found at Ser-1220, Ser-1222, Ser-1229, Ser-1237, Ser-1243, and Ser-1247. Residues 1235–1247 show a composition bias toward low complexity; that stretch reads RVSPVLPSSSLES. The span at 1250-1265 shows a compositional bias: basic and acidic residues; it reads DEDKGENSTKVQDKPE. Ser-1266, Ser-1268, and Ser-1304 each carry phosphoserine. Thr-1319 is modified (phosphothreonine). Phosphoserine occurs at positions 1327, 1329, and 1337. The segment covering 1327-1344 has biased composition (polar residues); that stretch reads SFSTSDVSKLSPVKTSTE. Residues 1592–1641 form a Phorbol-ester/DAG-type zinc finger; that stretch reads GHVFASYQVNIPQSCEQCLSYIWLMDKALLCSVCKMTCHKKCVHKIQSYC. Residue Ser-1649 is modified to Phosphoserine. The Rho-GAP domain maps to 1663–1848; sequence DSLTSDKASV…MLIKEQMRKY (186 aa). Residues 1699–1704 form an interaction with RHOA region; the sequence is AANRTR. The stretch at 1841 to 1861 forms a coiled coil; it reads IKEQMRKYKVKMEEINHLEAA. The residue at position 1886 (Ser-1886) is a Phosphoserine. A disordered region spans residues 1891-1923; it reads VRTKSPRTPVVQDLEELGALPEEAAGGDEDREK. Positions 1918–1948 form a coiled coil; it reads DEDREKEILMERIQSIKEEKEDITYRLPELD. Phosphoserine occurs at positions 1932, 1952, and 1959. Over residues 1937-1953 the composition is skewed to basic and acidic residues; sequence KEDITYRLPELDPRGSD. A disordered region spans residues 1937-1980; the sequence is KEDITYRLPELDPRGSDEENLDSETSASTESLLEERAVRGAAEE. Phosphothreonine is present on Thr-1965. Residues 1969–1980 show a composition bias toward basic and acidic residues; the sequence is LEERAVRGAAEE.

The protein belongs to the TRAFAC class myosin-kinesin ATPase superfamily. Myosin family. Interacts (via IQ domains) with CALM. Interacts with RHOA. Interacts (via Rho-GAP domain) with ROBO1; this inhibits the interaction with RHOA and the stimulation of RHOA GTPase activity, and thereby increases the levels of active RHOA. Expressed in testis, lung, thymus, brain, liver, spleen and heart muscle. Detected in lung, testis, spleen and liver, and at reduced level in different brain regions (at protein level).

The protein localises to the cytoplasm. The protein resides in the cell cortex. Its subcellular location is the perinuclear region. It localises to the cytoskeleton. Its function is as follows. Myosins are actin-based motor molecules with ATPase activity. Unconventional myosins serve in intracellular movements. Binds actin with high affinity both in the absence and presence of ATP and its mechanochemical activity is inhibited by calcium ions. Also acts as a GTPase activator for RHOA. Plays a role in the regulation of cell migration via its role as RHOA GTPase activator. This is regulated by its interaction with the SLIT2 receptor ROBO1; interaction with ROBO1 impairs interaction with RHOA and subsequent activation of RHOA GTPase activity, and thereby leads to increased levels of active, GTP-bound RHOA. In Rattus norvegicus (Rat), this protein is Unconventional myosin-IXb (Myo9b).